Consider the following 229-residue polypeptide: uncharacterized protein (229 aa).

The 68-residue stretch at 2 to 69 folds into the S4 RNA-binding domain; that stretch reads QRLAKLISNA…KSRLWIYYKP (68 aa). Catalysis depends on D102, which acts as the Nucleophile.

The protein belongs to the pseudouridine synthase RsuA family.

It carries out the reaction a uridine in RNA = a pseudouridine in RNA. This is an uncharacterized protein from Rickettsia bellii (strain RML369-C).